The following is a 146-amino-acid chain: VHLTGEEKSLVTGLWGKVNVDEVGGEALGRLLVVYPWTQRFFDSFGDLSSADAIMNNPKVKAHGKKVLNSFSDGLKNLDNLKGTFAKLSELHCDKLHVDPENFKLLGNVLVCVLAHHFGKEFTPQVQAAYQKVVAGVANALAHKYH.

Val1 carries the post-translational modification N-acetylvaline. Residues 2-146 (HLTGEEKSLV…VANALAHKYH (145 aa)) enclose the Globin domain. Thr12 bears the Phosphothreonine mark. Ser44 is subject to Phosphoserine. Lys59 is subject to N6-acetyllysine. Residue His63 coordinates heme b. Position 82 is an N6-acetyllysine (Lys82). Heme b is bound at residue His92. Residue Cys93 is modified to S-nitrosocysteine. An N6-acetyllysine modification is found at Lys144.

Belongs to the globin family. In terms of assembly, heterotetramer of two alpha chains and two beta chains. Red blood cells.

Its function is as follows. Involved in oxygen transport from the lung to the various peripheral tissues. The protein is Hemoglobin subunit beta (HBB) of Ursus maritimus (Polar bear).